The following is a 327-amino-acid chain: GMP reductase (327 aa).

The active-site Thioimidate intermediate is Cys176. 205–228 (IIADGGIRTHGDIAKSIRFGASMV) provides a ligand contact to NADP(+).

Belongs to the IMPDH/GMPR family. GuaC type 2 subfamily.

The enzyme catalyses IMP + NH4(+) + NADP(+) = GMP + NADPH + 2 H(+). In terms of biological role, catalyzes the irreversible NADPH-dependent deamination of GMP to IMP. It functions in the conversion of nucleobase, nucleoside and nucleotide derivatives of G to A nucleotides, and in maintaining the intracellular balance of A and G nucleotides. The chain is GMP reductase from Streptococcus pyogenes serotype M3 (strain ATCC BAA-595 / MGAS315).